A 1157-amino-acid polypeptide reads, in one-letter code: Probable inactive leucine-rich repeat receptor kinase XIAO (1157 aa).

The N-terminal stretch at 1–21 (MPPPPRLLFLLVMLLVVAAPG) is a signal peptide. The N-linked (GlcNAc...) asparagine glycan is linked to N58. LRR repeat units lie at residues 101-125 (LVYL…LSRI), 127-149 (SLRA…FLAN), 150-172 (LTNL…VSFP), 173-196 (PSLK…VSAS), 198-220 (TSLQ…SLGT), 221-245 (LQDL…LSNC), 247-269 (ALLH…VAAI), 270-293 (PSLQ…AFGG), 296-319 (NSSL…VSLG), 320-343 (KDLQ…LAGA), 344-367 (GGLT…VGQL), 368-391 (TALQ…IGRC), 393-414 (ALQV…ALGG), 415-439 (LRRL…LGNL), 440-463 (SWLE…LFVL), 464-487 (GNLT…IGNL), 489-511 (ALQS…IGNL), 513-536 (NLRV…LFGL), 537-559 (PQLQ…GFSS), 561-583 (WSLR…TYGY), 584-608 (LPSL…LANC), 609-631 (SNLT…DFAR), 632-656 (LGEL…ISNC), 658-680 (SLVT…LSNL), 681-704 (SKLQ…LAQI), and 706-728 (GMLS…LGSR). The N-linked (GlcNAc...) asparagine glycan is linked to N149. N192, N204, and N244 each carry an N-linked (GlcNAc...) asparagine glycan. Residue N296 is glycosylated (N-linked (GlcNAc...) asparagine). An N-linked (GlcNAc...) asparagine glycan is attached at N438. N-linked (GlcNAc...) asparagine glycans are attached at residues N465, N494, and N524. N-linked (GlcNAc...) asparagine glycans are attached at residues N567, N607, N610, N655, N679, N692, and N711. Residues 765–785 (LALLIGVVAATVLLLVLFCCC) form a helical membrane-spanning segment. Residues 804 to 825 (VKKRRRSPGRGSGSSGTSTDSV) are disordered. The region spanning 849 to 1144 (FDEENVLSRG…LEGCRVGPDI (296 aa)) is the Protein kinase domain. ATP contacts are provided by residues 855-863 (LSRGRHGLV), 930-932 (DYM), 936-939 (NLAT), 980-985 (DVKPQN), and D998.

This sequence belongs to the protein kinase superfamily. Ser/Thr protein kinase family. In terms of tissue distribution, expressed in developing culm, coleoptile, primary root, young spikelet, young leaf blade and leaf sheath, floral meristem primordia, stamen primordia, and lemma and palea primordia.

The protein resides in the cell membrane. In terms of biological role, functions in the early stages of organ development by regulating cell division rate. Is probably involved in the regulation of a number of cell-cycle genes. May act as regulator of brassinosteroid (BR) signaling and cell-cycle controlling organ growth. The polypeptide is Probable inactive leucine-rich repeat receptor kinase XIAO (Oryza sativa subsp. japonica (Rice)).